A 466-amino-acid polypeptide reads, in one-letter code: UDP-N-acetylmuramoylalanine--D-glutamate ligase (466 aa).

121-127 is an ATP binding site; sequence GTNGKST.

Belongs to the MurCDEF family.

It localises to the cytoplasm. The catalysed reaction is UDP-N-acetyl-alpha-D-muramoyl-L-alanine + D-glutamate + ATP = UDP-N-acetyl-alpha-D-muramoyl-L-alanyl-D-glutamate + ADP + phosphate + H(+). The protein operates within cell wall biogenesis; peptidoglycan biosynthesis. Its function is as follows. Cell wall formation. Catalyzes the addition of glutamate to the nucleotide precursor UDP-N-acetylmuramoyl-L-alanine (UMA). This Bradyrhizobium diazoefficiens (strain JCM 10833 / BCRC 13528 / IAM 13628 / NBRC 14792 / USDA 110) protein is UDP-N-acetylmuramoylalanine--D-glutamate ligase.